We begin with the raw amino-acid sequence, 1282 residues long: Ribosome biogenesis protein BMS1 homolog (1282 aa).

Residues 1-24 (MEAKDQKKHRKKNSGPKAAKKKKR) are compositionally biased toward basic residues. Residues 1–43 (MEAKDQKKHRKKNSGPKAAKKKKRLLQDLQLGDEEDARKRNPK) form a disordered region. K43 is covalently cross-linked (Glycyl lysine isopeptide (Lys-Gly) (interchain with G-Cter in SUMO2)). Residues 80–245 (PPPIVVVVMG…GRFITVMKFR (166 aa)) form the Bms1-type G domain. A G1 region spans residues 89-96 (GPPKVGKS). 89-96 (GPPKVGKS) serves as a coordination point for ATP. Residues 117-121 (PVTIV) form a G2 region. A G3 region spans residues 132 to 135 (ECGC). Positions 184–187 (THLD) are G4. S188 bears the Phosphoserine mark. The interval 219–228 (LSGMVHGEYQ) is G5. 2 disordered regions span residues 397 to 557 (DSKP…ANCQ) and 575 to 667 (PTFD…ALKW). Residues K399 and K415 each participate in a glycyl lysine isopeptide (Lys-Gly) (interchain with G-Cter in SUMO2) cross-link. 2 stretches are compositionally biased toward acidic residues: residues 434–472 (GDEDESGDSDDEEDDEMSEDDGLENGSSDEEAEEEENAE) and 503–531 (DSDDDLERSSAEEGEAEEADESSEEEDCT). Residues 535 to 550 (KGISGSKAAGEGSKAG) are compositionally biased toward low complexity. Phosphoserine is present on S552. Residues 588-610 (FASEDESEESSSLSAEEEDSENE) show a composition bias toward acidic residues. Phosphoserine is present on residues S625 and S639. K646 is covalently cross-linked (Glycyl lysine isopeptide (Lys-Gly) (interchain with G-Cter in SUMO2)). Positions 653–667 (EENNDSKETSGALKW) are enriched in basic and acidic residues. The residue at position 708 (T708) is a Phosphothreonine. Disordered regions lie at residues 787–822 (ETGDVHKGKSGPNTQNEDIEKEVKEEIDPDEEESAK) and 1178–1202 (NKPKTQAKAGKVPKDRRRPAVIREP). K810 is covalently cross-linked (Glycyl lysine isopeptide (Lys-Gly) (interchain with G-Cter in SUMO1); alternate). Residue K810 forms a Glycyl lysine isopeptide (Lys-Gly) (interchain with G-Cter in SUMO2); alternate linkage. K1206 is covalently cross-linked (Glycyl lysine isopeptide (Lys-Gly) (interchain with G-Cter in SUMO2)). Residues 1219 to 1282 (SQKMKKAKEQ…SLKGAEGQLQ (64 aa)) form a disordered region. A compositionally biased stretch (basic and acidic residues) spans 1228 to 1248 (QRHLHNKEHFRAKQKEEEEKL). A compositionally biased stretch (basic residues) spans 1249-1259 (KRQKDLRKKLF).

This sequence belongs to the TRAFAC class translation factor GTPase superfamily. Bms1-like GTPase family. BMS1 subfamily. In terms of assembly, part of the small subunit (SSU) processome, composed of more than 70 proteins and the RNA chaperone small nucleolar RNA (snoRNA) U3. Interacts with RCL1.

It localises to the nucleus. It is found in the nucleolus. The catalysed reaction is GTP + H2O = GDP + phosphate + H(+). GTPase required for the synthesis of 40S ribosomal subunits and for processing of pre-ribosomal RNA (pre-rRNA) at sites A0, A1, and A2. Controls access of pre-rRNA intermediates to RCL1 during ribosome biogenesis by binding RCL1 in a GTP-dependent manner, and delivering it to pre-ribosomes. GTP-binding and/or GTP hydrolysis may induce conformational rearrangements within the BMS1-RCL1 complex allowing the interaction of RCL1 with its RNA substrate. Required for RCL1 import into the nucleus. This chain is Ribosome biogenesis protein BMS1 homolog, found in Homo sapiens (Human).